The chain runs to 157 residues: Cell number regulator 10 (157 aa).

2 helical membrane-spanning segments follow: residues 41–57 (DCGLCCLTCWCPCITFG) and 66–83 (GATSCGTAGALYAVLAYF).

The protein belongs to the cornifelin family. As to expression, expressed in roots, leaves, stalks, immature ears and silks.

The protein localises to the membrane. This Zea mays (Maize) protein is Cell number regulator 10 (CNR10).